We begin with the raw amino-acid sequence, 258 residues long: MTPLDLWLSRSIPMCLLLQSLVLMVLCFPSASTCPKGCTCQRSESPPHGLNVTCSLSRLKEIPPDVPPDTQLLQLDRNHISLVPDRIFHGLRMLRRLNLSHNAVETLGEGAFIGLEGSLEVLDLSYNRITSVHKDAFARLKARVVVDNNPWHCDCALQQALGGMAHNHERVLCRSSELRDQEGQPFMAVDADLCNLAKRTTDYAMLVTMFGWFAMVISYVVYYVRQNQEDARRHLEYLKSLPSKPKKPDEPEDISTVV.

The N-terminal stretch at M1 to T33 is a signal peptide. The LRRNT domain occupies C34 to P68. N51 carries N-linked (GlcNAc...) asparagine glycosylation. 3 LRR repeats span residues D69–G90, M93–G114, and S118–R139. The N-linked (GlcNAc...) asparagine glycan is linked to N98. In terms of domain architecture, LRRCT spans N149–L196. A helical transmembrane segment spans residues A204–V224.

Belongs to the LRRC3 family.

It localises to the membrane. The polypeptide is Leucine-rich repeat-containing protein 3B (lrrc3b) (Danio rerio (Zebrafish)).